We begin with the raw amino-acid sequence, 517 residues long: Benzoate 4-monooxygenase bphA (517 aa).

A helical membrane pass occupies residues 4–24 (LLLSPYGAYLGLALLVLYYLL). N-linked (GlcNAc...) asparagine glycans are attached at residues Asn-282 and Asn-325. Cys-461 is a binding site for heme.

Belongs to the cytochrome P450 family. Heme serves as cofactor.

It localises to the membrane. The enzyme catalyses benzoate + reduced [NADPH--hemoprotein reductase] + O2 = 4-hydroxybenzoate + oxidized [NADPH--hemoprotein reductase] + H2O + H(+). Cytochrome P450 monooxygenase; part of the benzoic acid degradation pathway also known as the protocatechuic acid pathway. Benzoic acid debradation begins with the conversion of benzoic acid into 4-hydroxybenzoic acid through hydroxylation by the benzoate-4-monooxygenase bphA, and its partner NADPH-cytochrome P450 reductase cprA which act as a mediator in electron donation from NADPH. 4-Hydroxybenzoic acid is then converted into 3,4-dihydroxybenzoic acid (also called protocatechuic acid) by the p-hydroxybenzoate-m-hydroxylase phhA. Protocatechuic acid is converted into 3-carboxy-cis,cis-muconic acid by the intradiol ring-cleavage dioxygenase prcA, which is further metabolized through the 3-oxoadipate pathway to finally enter the tricarboxylic acid cycle (TCA). In terms of biological role, responsible for cytochrome P450 dependent benzoate hydroxylation in microsomes; requires cprA as the mediator in electron donation from NADPH. This Aspergillus niger protein is Benzoate 4-monooxygenase bphA.